The sequence spans 579 residues: Arginine--tRNA ligase (579 aa).

The 'HIGH' region motif lies at 123 to 133 (ANPTGPVHVGR).

The protein belongs to the class-I aminoacyl-tRNA synthetase family.

The protein localises to the cytoplasm. The enzyme catalyses tRNA(Arg) + L-arginine + ATP = L-arginyl-tRNA(Arg) + AMP + diphosphate. The chain is Arginine--tRNA ligase from Haloarcula marismortui (strain ATCC 43049 / DSM 3752 / JCM 8966 / VKM B-1809) (Halobacterium marismortui).